Consider the following 436-residue polypeptide: UPF0761 membrane protein Bxeno_A3061 (436 aa).

6 helical membrane-spanning segments follow: residues L42 to F62, G96 to V116, I136 to I156, A180 to L200, A210 to Y230, and V241 to I261.

It belongs to the UPF0761 family.

It localises to the cell inner membrane. This is UPF0761 membrane protein Bxeno_A3061 from Paraburkholderia xenovorans (strain LB400).